The chain runs to 123 residues: Large ribosomal subunit protein uL18 (123 aa).

This sequence belongs to the universal ribosomal protein uL18 family. In terms of assembly, part of the 50S ribosomal subunit; part of the 5S rRNA/L5/L18/L25 subcomplex. Contacts the 5S and 23S rRNAs.

This is one of the proteins that bind and probably mediate the attachment of the 5S RNA into the large ribosomal subunit, where it forms part of the central protuberance. This Bifidobacterium adolescentis (strain ATCC 15703 / DSM 20083 / NCTC 11814 / E194a) protein is Large ribosomal subunit protein uL18.